The following is a 400-amino-acid chain: Beta-ketoadipyl-CoA thiolase (400 aa).

The active-site Acyl-thioester intermediate is the Cys90. Active-site proton acceptor residues include His356 and Cys386.

Belongs to the thiolase-like superfamily. Thiolase family.

It carries out the reaction succinyl-CoA + acetyl-CoA = 3-oxoadipyl-CoA + CoA. It participates in aromatic compound metabolism; beta-ketoadipate pathway; acetyl-CoA and succinyl-CoA from 3-oxoadipate: step 2/2. Its function is as follows. Catalyzes thiolytic cleavage of beta-ketoadipyl-CoA to succinyl-CoA and acetyl-CoA. The polypeptide is Beta-ketoadipyl-CoA thiolase (pcaF) (Pseudomonas putida (Arthrobacter siderocapsulatus)).